A 315-amino-acid polypeptide reads, in one-letter code: Glycine--tRNA ligase alpha subunit (315 aa).

This sequence belongs to the class-II aminoacyl-tRNA synthetase family. Tetramer of two alpha and two beta subunits.

It localises to the cytoplasm. It catalyses the reaction tRNA(Gly) + glycine + ATP = glycyl-tRNA(Gly) + AMP + diphosphate. The protein is Glycine--tRNA ligase alpha subunit of Pseudomonas entomophila (strain L48).